Reading from the N-terminus, the 324-residue chain is Adipolin (324 aa).

Residues 1–24 (MRCWVWLLVAIVLCQQLSVVRVLA) form the signal peptide. Disordered regions lie at residues 28–66 (ERKK…DPGL) and 83–121 (GANS…MPGA). Over residues 40 to 49 (EPFNVSLSNS) the composition is skewed to polar residues. Residue Asn-43 is glycosylated (N-linked (GlcNAc...) asparagine). Basic and acidic residues predominate over residues 50–60 (EELHETDKLSE). Basic residues predominate over residues 86–98 (SKKKCKGKDKKLR). Residues 103–118 (PPGPPGPQGPPGPPGM) are compositionally biased toward pro residues. Positions 169–324 (YRRVDEGFHC…SDFMGILMGL (156 aa)) constitute a C1q domain.

It belongs to the adipolin/erythroferrone family. As to quaternary structure, homomultimer; disulfide-linked.

It localises to the secreted. In terms of biological role, insulin-sensitizing adipocyte-secreted protein (adipokine) that regulates glucose metabolism in liver and adipose tissue. The sequence is that of Adipolin (c1qtnf12) from Xenopus tropicalis (Western clawed frog).